The chain runs to 287 residues: Ret finger protein-like 4A (287 aa).

The segment at 11-53 (CPVCLKDLEEAVQLKCGYACCLQCLNSLQKEPDGEGLLCRFCS) adopts an RING-type; degenerate zinc-finger fold. The region spanning 78-276 (EPKLKSVLTM…LSICSVINPS (199 aa)) is the B30.2/SPRY domain.

As to quaternary structure, interacts with PSMB1, UBE2A and CCNB1.

The protein localises to the cytoplasm. The protein resides in the nucleus. This Homo sapiens (Human) protein is Ret finger protein-like 4A (RFPL4A).